Reading from the N-terminus, the 110-residue chain is Cell division protein FtsB (110 aa).

The Cytoplasmic portion of the chain corresponds to 1 to 3 (MRL). The helical transmembrane segment at 4-21 (IILCLAALVLLIQFPLWL) threads the bilayer. Topologically, residues 22–110 (GKGGWLRVWD…PPKIEPKEKR (89 aa)) are periplasmic. Residues 31-64 (DLDQQVIAAQKKNDELRARNAKLNSEVQDLKEGT) are a coiled coil.

It belongs to the FtsB family. Part of a complex composed of FtsB, FtsL and FtsQ.

The protein resides in the cell inner membrane. Essential cell division protein. May link together the upstream cell division proteins, which are predominantly cytoplasmic, with the downstream cell division proteins, which are predominantly periplasmic. This Herminiimonas arsenicoxydans protein is Cell division protein FtsB.